The following is a 118-amino-acid chain: Large ribosomal subunit protein bL17 (118 aa).

It belongs to the bacterial ribosomal protein bL17 family. In terms of assembly, part of the 50S ribosomal subunit. Contacts protein L32.

The chain is Large ribosomal subunit protein bL17 from Gemmatimonas aurantiaca (strain DSM 14586 / JCM 11422 / NBRC 100505 / T-27).